We begin with the raw amino-acid sequence, 88 residues long: Small ribosomal subunit protein bS18B (88 aa).

Belongs to the bacterial ribosomal protein bS18 family. In terms of assembly, part of the 30S ribosomal subunit. Forms a tight heterodimer with protein bS6.

Binds as a heterodimer with protein bS6 to the central domain of the 16S rRNA, where it helps stabilize the platform of the 30S subunit. This Mycobacterium bovis (strain ATCC BAA-935 / AF2122/97) protein is Small ribosomal subunit protein bS18B (rpsR2).